A 377-amino-acid chain; its full sequence is Terpene synthase 1 (377 aa).

The DDxx(x)D/E motif motif lies at 81-86 (DDALDA). The NDxxSxxxD/E motif motif lies at 221–229 (NDLVSYEKE). Residues 326 to 359 (RKQSSSPNLTNSISIPTNNTNNSNNITSSPNKKQ) form a disordered region. Low complexity predominate over residues 335–356 (TNSISIPTNNTNNSNNITSSPN).

It belongs to the terpene synthase family.

It catalyses the reaction (2E,6E)-farnesyl diphosphate = (2S,3R,6S,9S)-(-)-protoillud-7-ene + diphosphate. In terms of biological role, terpene synthase that converts its substrate farnesyl diphosphate (FPP) into the sesquiterpene protoillud-7-ene. This chain is Terpene synthase 1, found in Dictyostelium purpureum (Slime mold).